The chain runs to 176 residues: NAD(P)H-quinone oxidoreductase subunit 6, chloroplastic (176 aa).

The next 5 membrane-spanning stretches (helical) occupy residues 10 to 30 (FLLV…VLLT), 32 to 52 (PIFS…FYIL), 61 to 81 (AQLL…VMFM), 95 to 115 (VGNG…ITII), and 152 to 172 (FFLP…GAIA).

This sequence belongs to the complex I subunit 6 family. As to quaternary structure, NDH is composed of at least 16 different subunits, 5 of which are encoded in the nucleus.

Its subcellular location is the plastid. The protein resides in the chloroplast thylakoid membrane. The catalysed reaction is a plastoquinone + NADH + (n+1) H(+)(in) = a plastoquinol + NAD(+) + n H(+)(out). It carries out the reaction a plastoquinone + NADPH + (n+1) H(+)(in) = a plastoquinol + NADP(+) + n H(+)(out). In terms of biological role, NDH shuttles electrons from NAD(P)H:plastoquinone, via FMN and iron-sulfur (Fe-S) centers, to quinones in the photosynthetic chain and possibly in a chloroplast respiratory chain. The immediate electron acceptor for the enzyme in this species is believed to be plastoquinone. Couples the redox reaction to proton translocation, and thus conserves the redox energy in a proton gradient. This Populus alba (White poplar) protein is NAD(P)H-quinone oxidoreductase subunit 6, chloroplastic (ndhG).